A 66-amino-acid polypeptide reads, in one-letter code: Probable cytochrome b-c1 complex subunit 9 (66 aa).

At 1 to 20 (MSNALTNIFYKYVARRNSTW) the chain is on the mitochondrial matrix side. Residues 21–46 (MAGAILGAFVLDSTVSGAVNTFFDSV) form a helical membrane-spanning segment. Over 47-66 (NKGKLWKDVYAERVKKGISQ) the chain is Mitochondrial intermembrane.

This sequence belongs to the UQCR10/QCR9 family. In terms of assembly, component of the ubiquinol-cytochrome c oxidoreductase (cytochrome b-c1 complex, complex III, CIII), a multisubunit enzyme composed of 3 respiratory subunits cytochrome b, cytochrome c1 and Rieske protein, 2 core protein subunits, and additional low-molecular weight protein subunits. The complex exists as an obligatory dimer and forms supercomplexes (SCs) in the inner mitochondrial membrane with cytochrome c oxidase (complex IV, CIV).

It is found in the mitochondrion inner membrane. In terms of biological role, component of the ubiquinol-cytochrome c oxidoreductase, a multisubunit transmembrane complex that is part of the mitochondrial electron transport chain which drives oxidative phosphorylation. The respiratory chain contains 3 multisubunit complexes succinate dehydrogenase (complex II, CII), ubiquinol-cytochrome c oxidoreductase (cytochrome b-c1 complex, complex III, CIII) and cytochrome c oxidase (complex IV, CIV), that cooperate to transfer electrons derived from NADH and succinate to molecular oxygen, creating an electrochemical gradient over the inner membrane that drives transmembrane transport and the ATP synthase. The cytochrome b-c1 complex catalyzes electron transfer from ubiquinol to cytochrome c, linking this redox reaction to translocation of protons across the mitochondrial inner membrane, with protons being carried across the membrane as hydrogens on the quinol. In the process called Q cycle, 2 protons are consumed from the matrix, 4 protons are released into the intermembrane space and 2 electrons are passed to cytochrome c. The protein is Probable cytochrome b-c1 complex subunit 9 of Dictyostelium discoideum (Social amoeba).